The primary structure comprises 242 residues: uncharacterized protein (242 aa).

The 68-residue stretch at 2 to 69 (YRLAKIISNA…KPRLWIYYKP (68 aa)) folds into the S4 RNA-binding domain. Catalysis depends on Asp102, which acts as the Nucleophile.

Belongs to the pseudouridine synthase RsuA family.

It catalyses the reaction a uridine in RNA = a pseudouridine in RNA. This is an uncharacterized protein from Rickettsia typhi (strain ATCC VR-144 / Wilmington).